Here is a 270-residue protein sequence, read N- to C-terminus: Putative hydro-lyase Noca_0093 (270 aa).

This sequence belongs to the D-glutamate cyclase family.

The chain is Putative hydro-lyase Noca_0093 from Nocardioides sp. (strain ATCC BAA-499 / JS614).